The following is a 629-amino-acid chain: DNA mismatch repair protein MutL (629 aa).

The protein belongs to the DNA mismatch repair MutL/HexB family.

Functionally, this protein is involved in the repair of mismatches in DNA. It is required for dam-dependent methyl-directed DNA mismatch repair. May act as a 'molecular matchmaker', a protein that promotes the formation of a stable complex between two or more DNA-binding proteins in an ATP-dependent manner without itself being part of a final effector complex. The chain is DNA mismatch repair protein MutL from Haemophilus influenzae (strain 86-028NP).